A 523-amino-acid polypeptide reads, in one-letter code: Uridylate cyclase (523 aa).

2 consecutive Guanylate cyclase domains span residues 69–209 (VHVY…AKLA) and 318–438 (MSIF…IGIR). The a ribonucleoside 5'-triphosphate site is built by Y72 and R125. Positions 323, 324, and 372 each coordinate Mn(2+).

It belongs to the adenylyl cyclase class-4/guanylyl cyclase family. Pyrimidine cyclase subfamily. Monomer. The cofactor is Mn(2+).

It is found in the cytoplasm. The catalysed reaction is UTP = 3',5'-cyclic UMP + diphosphate. In terms of biological role, pycsar (pyrimidine cyclase system for antiphage resistance) provides immunity against bacteriophage. The pyrimidine cyclase (PycC) synthesizes cyclic nucleotides in response to infection; these serve as specific second messenger signals. The signals activate the nearby effector, leading to bacterial cell death and abortive phage infection. A clade A Pycsar system. The pyrimidine cyclase gene of a two-gene Pycsar system, generates cyclic UMP (cUMP) from UTP, has little to no activity on ATP, CTP or GTP. Expression of this and effector RsPycTM (AC A0A4R2UGS4) probably confers resistance to some bacteriophage. The genes are probably only expressed in response to bacteriophage infection. The chain is Uridylate cyclase from Rhizobium sp. (strain PP-F2F-G36).